The following is a 718-amino-acid chain: Centromere/kinetochore protein zw10 (718 aa).

It belongs to the ZW10 family.

It is found in the cytoplasm. The protein resides in the nucleus. Its subcellular location is the chromosome. It localises to the centromere. The protein localises to the kinetochore. In terms of biological role, required for accurate chromosome segregation. This Drosophila pseudoobscura pseudoobscura (Fruit fly) protein is Centromere/kinetochore protein zw10 (mit(1)15).